The sequence spans 143 residues: 6,7-dimethyl-8-ribityllumazine synthase (143 aa).

5-amino-6-(D-ribitylamino)uracil is bound by residues Trp-10, 44-46 (SFE), and 68-70 (CVI). (2S)-2-hydroxy-3-oxobutyl phosphate is bound at residue 73–74 (DT). His-76 acts as the Proton donor in catalysis. Residue Tyr-101 participates in 5-amino-6-(D-ribitylamino)uracil binding. Arg-115 lines the (2S)-2-hydroxy-3-oxobutyl phosphate pocket.

The protein belongs to the DMRL synthase family.

The catalysed reaction is (2S)-2-hydroxy-3-oxobutyl phosphate + 5-amino-6-(D-ribitylamino)uracil = 6,7-dimethyl-8-(1-D-ribityl)lumazine + phosphate + 2 H2O + H(+). It participates in cofactor biosynthesis; riboflavin biosynthesis; riboflavin from 2-hydroxy-3-oxobutyl phosphate and 5-amino-6-(D-ribitylamino)uracil: step 1/2. Functionally, catalyzes the formation of 6,7-dimethyl-8-ribityllumazine by condensation of 5-amino-6-(D-ribitylamino)uracil with 3,4-dihydroxy-2-butanone 4-phosphate. This is the penultimate step in the biosynthesis of riboflavin. This is 6,7-dimethyl-8-ribityllumazine synthase from Bacteroides fragilis (strain YCH46).